Here is a 230-residue protein sequence, read N- to C-terminus: Large ribosomal subunit protein uL1 (230 aa).

The protein belongs to the universal ribosomal protein uL1 family. In terms of assembly, part of the 50S ribosomal subunit.

Binds directly to 23S rRNA. The L1 stalk is quite mobile in the ribosome, and is involved in E site tRNA release. Its function is as follows. Protein L1 is also a translational repressor protein, it controls the translation of the L11 operon by binding to its mRNA. This chain is Large ribosomal subunit protein uL1, found in Caldicellulosiruptor bescii (strain ATCC BAA-1888 / DSM 6725 / KCTC 15123 / Z-1320) (Anaerocellum thermophilum).